The sequence spans 124 residues: Small ribosomal subunit protein uS12 (124 aa).

D89 bears the 3-methylthioaspartic acid mark.

This sequence belongs to the universal ribosomal protein uS12 family. Part of the 30S ribosomal subunit. Contacts proteins S8 and S17. May interact with IF1 in the 30S initiation complex.

With S4 and S5 plays an important role in translational accuracy. In terms of biological role, interacts with and stabilizes bases of the 16S rRNA that are involved in tRNA selection in the A site and with the mRNA backbone. Located at the interface of the 30S and 50S subunits, it traverses the body of the 30S subunit contacting proteins on the other side and probably holding the rRNA structure together. The combined cluster of proteins S8, S12 and S17 appears to hold together the shoulder and platform of the 30S subunit. The polypeptide is Small ribosomal subunit protein uS12 (Moorella thermoacetica (strain ATCC 39073 / JCM 9320)).